Consider the following 466-residue polypeptide: UDP-N-acetylmuramoylalanine--D-glutamate ligase (466 aa).

127 to 133 (GSNGKST) lines the ATP pocket.

It belongs to the MurCDEF family.

It localises to the cytoplasm. The enzyme catalyses UDP-N-acetyl-alpha-D-muramoyl-L-alanine + D-glutamate + ATP = UDP-N-acetyl-alpha-D-muramoyl-L-alanyl-D-glutamate + ADP + phosphate + H(+). Its pathway is cell wall biogenesis; peptidoglycan biosynthesis. Functionally, cell wall formation. Catalyzes the addition of glutamate to the nucleotide precursor UDP-N-acetylmuramoyl-L-alanine (UMA). The polypeptide is UDP-N-acetylmuramoylalanine--D-glutamate ligase (Ruegeria pomeroyi (strain ATCC 700808 / DSM 15171 / DSS-3) (Silicibacter pomeroyi)).